A 278-amino-acid polypeptide reads, in one-letter code: 4-deoxy-L-threo-5-hexosulose-uronate ketol-isomerase (278 aa).

Zn(2+) is bound by residues His196, His198, Glu203, and His245.

This sequence belongs to the KduI family. The cofactor is Zn(2+).

It catalyses the reaction 5-dehydro-4-deoxy-D-glucuronate = 3-deoxy-D-glycero-2,5-hexodiulosonate. Its pathway is glycan metabolism; pectin degradation; 2-dehydro-3-deoxy-D-gluconate from pectin: step 4/5. Its function is as follows. Catalyzes the isomerization of 5-dehydro-4-deoxy-D-glucuronate to 3-deoxy-D-glycero-2,5-hexodiulosonate. This chain is 4-deoxy-L-threo-5-hexosulose-uronate ketol-isomerase, found in Salmonella agona (strain SL483).